Here is a 107-residue protein sequence, read N- to C-terminus: Phosphoribosyl-ATP pyrophosphatase (107 aa).

This sequence belongs to the PRA-PH family.

It localises to the cytoplasm. It carries out the reaction 1-(5-phospho-beta-D-ribosyl)-ATP + H2O = 1-(5-phospho-beta-D-ribosyl)-5'-AMP + diphosphate + H(+). It functions in the pathway amino-acid biosynthesis; L-histidine biosynthesis; L-histidine from 5-phospho-alpha-D-ribose 1-diphosphate: step 2/9. The sequence is that of Phosphoribosyl-ATP pyrophosphatase from Zymomonas mobilis subsp. mobilis (strain ATCC 31821 / ZM4 / CP4).